Here is a 197-residue protein sequence, read N- to C-terminus: UPF0314 protein R03235 (197 aa).

The next 2 membrane-spanning stretches (helical) occupy residues Ala-16–Met-36 and Leu-152–Val-172.

This sequence belongs to the UPF0314 family.

It is found in the cell membrane. This is UPF0314 protein R03235 from Rhizobium meliloti (strain 1021) (Ensifer meliloti).